A 373-amino-acid chain; its full sequence is Spermidine/putrescine import ATP-binding protein PotA (373 aa).

The region spanning 6–236 (LSLSNLTKQF…PANLFTARFV (231 aa)) is the ABC transporter domain. 38–45 (GPSGCGKT) is an ATP binding site.

It belongs to the ABC transporter superfamily. Spermidine/putrescine importer (TC 3.A.1.11.1) family. The complex is composed of two ATP-binding proteins (PotA), two transmembrane proteins (PotB and PotC) and a solute-binding protein (PotD).

The protein resides in the cell inner membrane. It carries out the reaction ATP + H2O + polyamine-[polyamine-binding protein]Side 1 = ADP + phosphate + polyamineSide 2 + [polyamine-binding protein]Side 1.. Part of the ABC transporter complex PotABCD involved in spermidine/putrescine import. Responsible for energy coupling to the transport system. This chain is Spermidine/putrescine import ATP-binding protein PotA, found in Marinobacter nauticus (strain ATCC 700491 / DSM 11845 / VT8) (Marinobacter aquaeolei).